Here is a 373-residue protein sequence, read N- to C-terminus: Histidinol-phosphate aminotransferase (373 aa).

At Lys-230 the chain carries N6-(pyridoxal phosphate)lysine.

The protein belongs to the class-II pyridoxal-phosphate-dependent aminotransferase family. Histidinol-phosphate aminotransferase subfamily. Homodimer. Pyridoxal 5'-phosphate is required as a cofactor.

The enzyme catalyses L-histidinol phosphate + 2-oxoglutarate = 3-(imidazol-4-yl)-2-oxopropyl phosphate + L-glutamate. The protein operates within amino-acid biosynthesis; L-histidine biosynthesis; L-histidine from 5-phospho-alpha-D-ribose 1-diphosphate: step 7/9. The protein is Histidinol-phosphate aminotransferase of Synechococcus elongatus (strain ATCC 33912 / PCC 7942 / FACHB-805) (Anacystis nidulans R2).